A 283-amino-acid chain; its full sequence is Pantothenate synthetase (283 aa).

30–37 (MGNLHDGH) is an ATP binding site. Histidine 37 serves as the catalytic Proton donor. Residue glutamine 61 coordinates (R)-pantoate. Position 61 (glutamine 61) interacts with beta-alanine. An ATP-binding site is contributed by 149–152 (GEKD). A (R)-pantoate-binding site is contributed by glutamine 155. 186–189 (LSSR) contributes to the ATP binding site.

Belongs to the pantothenate synthetase family. As to quaternary structure, homodimer.

It is found in the cytoplasm. It catalyses the reaction (R)-pantoate + beta-alanine + ATP = (R)-pantothenate + AMP + diphosphate + H(+). It functions in the pathway cofactor biosynthesis; (R)-pantothenate biosynthesis; (R)-pantothenate from (R)-pantoate and beta-alanine: step 1/1. Catalyzes the condensation of pantoate with beta-alanine in an ATP-dependent reaction via a pantoyl-adenylate intermediate. The protein is Pantothenate synthetase of Escherichia coli O17:K52:H18 (strain UMN026 / ExPEC).